Consider the following 279-residue polypeptide: Pantothenate synthetase (279 aa).

An ATP-binding site is contributed by 26–33 (MGNLHDGH). The active-site Proton donor is His-33. A (R)-pantoate-binding site is contributed by Gln-57. Gln-57 serves as a coordination point for beta-alanine. Residue 144–147 (GKKD) coordinates ATP. A (R)-pantoate-binding site is contributed by Gln-150. Residues Val-173 and 181-184 (LSSR) contribute to the ATP site.

The protein belongs to the pantothenate synthetase family. Homodimer.

The protein localises to the cytoplasm. The catalysed reaction is (R)-pantoate + beta-alanine + ATP = (R)-pantothenate + AMP + diphosphate + H(+). Its pathway is cofactor biosynthesis; (R)-pantothenate biosynthesis; (R)-pantothenate from (R)-pantoate and beta-alanine: step 1/1. Functionally, catalyzes the condensation of pantoate with beta-alanine in an ATP-dependent reaction via a pantoyl-adenylate intermediate. The sequence is that of Pantothenate synthetase from Burkholderia mallei (strain NCTC 10229).